Reading from the N-terminus, the 176-residue chain is MKVLRCLVCSFYIIVSLITTMTIGTPSMPAINTQTLYLAGHSSKLFERNVGCVKTRYLNQTGDWVTRSLIYVFTFDTEPWVTQAGAFQVKWEPYSPLLRVKASDYVRDNLGAKPDYFIRTYDNDFLLLSDLKEVRSTCSLWVTLKYVDRIPETINRTFYTICPDPVPVPFDERCYP.

A signal peptide spans 1–24 (MKVLRCLVCSFYIIVSLITTMTIG). E47 contributes to the cholesterol binding site. Disulfide bonds link C52/C174 and C138/C162. N-linked (GlcNAc...) asparagine glycans are attached at residues N59 and N155.

The protein belongs to the calycin superfamily. Lipocalin family. Homodimer; non-disulfide-linked. Each monomer accommodates one molecule of cholesterol in a pocket. Expressed in salivary glands.

Its subcellular location is the secreted. In terms of biological role, salivary tick protein that modulates host immune response. This protein blocks dendritic cell (DC) differentiation from monocytes. In addition, it inhibits up-regulation of costimulatory molecules and pro-inflammatory cytokines in response to stimuli and promotes up-regulation of co-inhibitory molecules and the anti-inflammatory cytokine interleukin-10. It has a pocket to accomodate cholesterol, which may have immune-modulatory roles, either directly or through interactions with the host gut microbiota. This Rhipicephalus appendiculatus (Brown ear tick) protein is Japanin.